The primary structure comprises 294 residues: MANNIPIGSPVRTKAIINRYFVKAKKNLGQNFLVDQDAILGIVEAADIQPGDQVIEIGPGIGSLTEQLLLAGAKVFAYEVDDSLPEILHNELPKKIGEQSLNDRFKLLLKDVLKADFQNDLAGFFDMKQPIKVVANLPYYITTPIIFALSESDLHFSSLTLMMQKEVAERLEAKPGNKEYGPLTISVQTEMNVKIALEVKSTSFMPRPKVDSSVVVLTPLQERPKIENRKHFIWVVKMCFSQRRKTLNNNLKALIPNAKEREALISKLGVDPRVRPEDLTIDQFIEIARNIPAK.

The S-adenosyl-L-methionine site is built by asparagine 31, leucine 33, glycine 58, glutamate 79, aspartate 111, and asparagine 136.

It belongs to the class I-like SAM-binding methyltransferase superfamily. rRNA adenine N(6)-methyltransferase family. RsmA subfamily.

Its subcellular location is the cytoplasm. The catalysed reaction is adenosine(1518)/adenosine(1519) in 16S rRNA + 4 S-adenosyl-L-methionine = N(6)-dimethyladenosine(1518)/N(6)-dimethyladenosine(1519) in 16S rRNA + 4 S-adenosyl-L-homocysteine + 4 H(+). Its function is as follows. Specifically dimethylates two adjacent adenosines (A1518 and A1519) in the loop of a conserved hairpin near the 3'-end of 16S rRNA in the 30S particle. May play a critical role in biogenesis of 30S subunits. This chain is Ribosomal RNA small subunit methyltransferase A, found in Lactobacillus acidophilus (strain ATCC 700396 / NCK56 / N2 / NCFM).